The following is a 432-amino-acid chain: 3-phosphoshikimate 1-carboxyvinyltransferase (432 aa).

3-phosphoshikimate contacts are provided by lysine 23, serine 24, and arginine 28. Lysine 23 contacts phosphoenolpyruvate. Residues glycine 95 and arginine 123 each contribute to the phosphoenolpyruvate site. The 3-phosphoshikimate site is built by serine 167, glutamine 169, aspartate 317, and lysine 344. A phosphoenolpyruvate-binding site is contributed by glutamine 169. Aspartate 317 (proton acceptor) is an active-site residue. Arginine 348 and arginine 390 together coordinate phosphoenolpyruvate.

The protein belongs to the EPSP synthase family. Monomer.

It is found in the cytoplasm. It carries out the reaction 3-phosphoshikimate + phosphoenolpyruvate = 5-O-(1-carboxyvinyl)-3-phosphoshikimate + phosphate. The protein operates within metabolic intermediate biosynthesis; chorismate biosynthesis; chorismate from D-erythrose 4-phosphate and phosphoenolpyruvate: step 6/7. Catalyzes the transfer of the enolpyruvyl moiety of phosphoenolpyruvate (PEP) to the 5-hydroxyl of shikimate-3-phosphate (S3P) to produce enolpyruvyl shikimate-3-phosphate and inorganic phosphate. This chain is 3-phosphoshikimate 1-carboxyvinyltransferase, found in Staphylococcus aureus (strain N315).